Consider the following 206-residue polypeptide: Crossover junction endodeoxyribonuclease RuvC (206 aa).

Residues D7, E67, and D138 contribute to the active site. Mg(2+) contacts are provided by D7, E67, and D138.

Belongs to the RuvC family. Homodimer which binds Holliday junction (HJ) DNA. The HJ becomes 2-fold symmetrical on binding to RuvC with unstacked arms; it has a different conformation from HJ DNA in complex with RuvA. In the full resolvosome a probable DNA-RuvA(4)-RuvB(12)-RuvC(2) complex forms which resolves the HJ. Requires Mg(2+) as cofactor.

It localises to the cytoplasm. The catalysed reaction is Endonucleolytic cleavage at a junction such as a reciprocal single-stranded crossover between two homologous DNA duplexes (Holliday junction).. Its function is as follows. The RuvA-RuvB-RuvC complex processes Holliday junction (HJ) DNA during genetic recombination and DNA repair. Endonuclease that resolves HJ intermediates. Cleaves cruciform DNA by making single-stranded nicks across the HJ at symmetrical positions within the homologous arms, yielding a 5'-phosphate and a 3'-hydroxyl group; requires a central core of homology in the junction. The consensus cleavage sequence is 5'-(A/T)TT(C/G)-3'. Cleavage occurs on the 3'-side of the TT dinucleotide at the point of strand exchange. HJ branch migration catalyzed by RuvA-RuvB allows RuvC to scan DNA until it finds its consensus sequence, where it cleaves and resolves the cruciform DNA. The sequence is that of Crossover junction endodeoxyribonuclease RuvC from Anaeromyxobacter sp. (strain Fw109-5).